The sequence spans 97 residues: IVSPPVCGNYFVEVGEECDCGLPRNCQNQCCNATTCKLIPGAQCEDGECCERCQFKGAGNVCRPRRSKCDIAESCTGQSPDCPTDRFRRNGVSCLNN.

The Disintegrin domain occupies 4-90; it reads PPVCGNYFVE…DCPTDRFRRN (87 aa). Ca(2+) contacts are provided by Val6, Asn9, Phe11, Glu13, Glu16, and Asp19. 7 cysteine pairs are disulfide-bonded: Cys7–Cys36, Cys18–Cys31, Cys20–Cys26, Cys30–Cys53, Cys44–Cys50, Cys49–Cys75, and Cys62–Cys82. Asn32 carries N-linked (GlcNAc...) asparagine glycosylation. The D/ECD-tripeptide; atypical (KCD) motif lies at 68 to 70; that stretch reads KCD.

It belongs to the venom metalloproteinase (M12B) family. P-III subfamily. P-IIIa sub-subfamily. As to quaternary structure, monomer. It depends on Zn(2+) as a cofactor. As to expression, expressed by the venom gland.

It localises to the secreted. Functionally, the hemorrhagic metalloproteinase-disintegrin-like bothrojarin-1 is a potent inhibitor of collagen-induced platelet aggregation by blockage of alpha-2/beta-1 (ITGA2/ITGB1) integrin. It does not present any fibrinogen-clotting activity. This Bothrops jararaca (Jararaca) protein is Zinc metalloproteinase-disintegrin-like bothrojarin-4.